We begin with the raw amino-acid sequence, 182 residues long: IQ domain-containing protein F1 (182 aa).

Basic and acidic residues-rich tracts occupy residues 1–10 (MGEEQQKPEE) and 31–43 (ETEK…KQEL). Residues 1 to 43 (MGEEQQKPEELNAPTDDAPQEKQQPADLSSETEKAKSKKKQEL) are disordered. IQ domains follow at residues 45 to 74 (EKDQ…SAWI) and 101 to 130 (EQWA…AVRT).

In terms of assembly, interacts with calmodulin. In terms of tissue distribution, specifically expressed in testes and mature spermatozoa (at protein level).

The protein localises to the cytoplasmic vesicle. It is found in the secretory vesicle. It localises to the acrosome. In terms of biological role, involved in sperm capacitation and acrosome reaction. The protein is IQ domain-containing protein F1 of Mus musculus (Mouse).